Consider the following 359-residue polypeptide: Cysteine/Cysteine sulfinic acid decarboxylase (359 aa).

It in the N-terminal section; belongs to the HFCD (homo-oligomeric flavin containing Cys decarboxylase) superfamily. The protein in the C-terminal section; belongs to the PPC synthetase family.

The catalysed reaction is L-cysteine + H(+) = cysteamine + CO2. It carries out the reaction 3-sulfino-L-alanine + H(+) = hypotaurine + CO2. Its activity is regulated as follows. Slightly stimulated in the presence of 1 mM Mg(2+). Functionally, catalyzes the decarboxylation of L-cysteine to cysteamine and of 3-sulfino-L-alanine (cysteine sulfinic acid) to hypotaurine. Also catalyzes the decarboxylation of various amino acids such as L-lysine, L-glutamate, L-asparaginate and L-proline. In vitro, shows highest activity with L-cysteine as substrate. The protein is Cysteine/Cysteine sulfinic acid decarboxylase of Unknown prokaryotic organism.